The following is a 232-amino-acid chain: 5'-methylthioadenosine/S-adenosylhomocysteine nucleosidase (232 aa).

The Proton acceptor role is filled by Glu12. Residues Gly78, Val152, and 173–174 (ME) contribute to the substrate site. The active-site Proton donor is Asp197.

This sequence belongs to the PNP/UDP phosphorylase family. MtnN subfamily. In terms of assembly, homodimer.

The catalysed reaction is S-adenosyl-L-homocysteine + H2O = S-(5-deoxy-D-ribos-5-yl)-L-homocysteine + adenine. The enzyme catalyses S-methyl-5'-thioadenosine + H2O = 5-(methylsulfanyl)-D-ribose + adenine. It catalyses the reaction 5'-deoxyadenosine + H2O = 5-deoxy-D-ribose + adenine. Its pathway is amino-acid biosynthesis; L-methionine biosynthesis via salvage pathway; S-methyl-5-thio-alpha-D-ribose 1-phosphate from S-methyl-5'-thioadenosine (hydrolase route): step 1/2. Its function is as follows. Catalyzes the irreversible cleavage of the glycosidic bond in both 5'-methylthioadenosine (MTA) and S-adenosylhomocysteine (SAH/AdoHcy) to adenine and the corresponding thioribose, 5'-methylthioribose and S-ribosylhomocysteine, respectively. Also cleaves 5'-deoxyadenosine, a toxic by-product of radical S-adenosylmethionine (SAM) enzymes, into 5-deoxyribose and adenine. Thus, is required for in vivo function of the radical SAM enzymes biotin synthase and lipoic acid synthase, that are inhibited by 5'-deoxyadenosine accumulation. This is 5'-methylthioadenosine/S-adenosylhomocysteine nucleosidase from Buchnera aphidicola subsp. Acyrthosiphon pisum (strain 5A).